Reading from the N-terminus, the 1005-residue chain is Vacuolar membrane protease (1005 aa).

Residues 1–14 (MAKETTARSILGYQ) lie on the Cytoplasmic side of the membrane. Residues 15-35 (TLPTTALIALIYVVAFFSVLV) traverse the membrane as a helical segment. At 36 to 353 (SDQLPSIPHP…PEDSAKQKSK (318 aa)) the chain is on the vacuolar side. N107 carries an N-linked (GlcNAc...) asparagine glycan. Zn(2+)-binding residues include H152 and D164. E196 acts as the Proton acceptor in catalysis. Zn(2+) is bound at residue E197. N213 carries N-linked (GlcNAc...) asparagine glycosylation. E222 and H311 together coordinate Zn(2+). A helical transmembrane segment spans residues 354 to 374 (PGVYFDRPVVLALLWAIGAVL). Topologically, residues 375-448 (KHNAGSPPPP…LITVWKQASF (74 aa)) are cytoplasmic. The interval 379–420 (GSPPPPPKPTVPHSANNASAGTGRPGASTRQPTRSFGSNEDA) is disordered. The segment covering 406–419 (STRQPTRSFGSNED) has biased composition (polar residues). The chain crosses the membrane as a helical span at residues 449 to 469 (WIALIVTVGLQALLAWGYVAI). Residues 470 to 479 (NPFTIYSRPY) lie on the Vacuolar side of the membrane. A helical membrane pass occupies residues 480–500 (FVLLSFFALSFFSMTLVLQAA). The Cytoplasmic portion of the chain corresponds to 501–519 (FPSSPVKHAIEVREQEKTT). A helical transmembrane segment spans residues 520–540 (ILLHLHLLSWIALLLSTILIG). Topologically, residues 541–543 (KSQ) are vacuolar. Residues 544-564 (VGSFYVVTVWYLGIWAATVIG) form a helical membrane-spanning segment. The Cytoplasmic portion of the chain corresponds to 565-644 (TLQPILVSKR…RKTNSKSKED (80 aa)). The interval 577-640 (DKGKRRARRS…ASNRRKTNSK (64 aa)) is disordered. A compositionally biased stretch (low complexity) spans 588-606 (SASTSSSSSSSSSSSSGSD). Residues 645–665 (GAIGWWIAQVLLTVPPVVMLV) form a helical membrane-spanning segment. The Vacuolar segment spans residues 666-686 (GQITSIVLEAMNQTLTDGNSA). An N-linked (GlcNAc...) asparagine glycan is attached at N677. Residues 687–707 (WSIYLLTALLATMLVLPVAPF) form a helical membrane-spanning segment. Residues 708 to 713 (SPKLHR) are Cytoplasmic-facing. Residues 714–734 (GLIFLSAAVFVGFTIYLWVVF) form a helical membrane-spanning segment. The Vacuolar segment spans residues 735-1005 (PFTRQDPFKV…VEASAPFTVV (271 aa)). 2 N-linked (GlcNAc...) asparagine glycosylation sites follow: N761 and N961.

The protein belongs to the peptidase M28 family. Requires Zn(2+) as cofactor.

The protein localises to the vacuole membrane. In terms of biological role, may be involved in vacuolar sorting and osmoregulation. This chain is Vacuolar membrane protease, found in Coprinopsis cinerea (strain Okayama-7 / 130 / ATCC MYA-4618 / FGSC 9003) (Inky cap fungus).